A 237-amino-acid chain; its full sequence is Class B acid phosphatase (237 aa).

Positions 1–23 (MRKVTLTLSAIALALSLNGAAMA) are cleaved as a signal peptide. Asp-69 (nucleophile) is an active-site residue. Mg(2+)-binding residues include Asp-69 and Asp-71. Catalysis depends on Asp-71, which acts as the Proton donor. Substrate contacts are provided by residues 137–138 (TG) and Lys-177. Asp-192 provides a ligand contact to Mg(2+).

The protein belongs to the class B bacterial acid phosphatase family. Homotetramer. The cofactor is Mg(2+).

It localises to the periplasm. The catalysed reaction is a phosphate monoester + H2O = an alcohol + phosphate. In terms of biological role, dephosphorylates several organic phosphate monoesters. Also has a phosphotransferase activity catalyzing the transfer of low-energy phosphate groups from organic phosphate monoesters to free hydroxyl groups of various organic compounds. The protein is Class B acid phosphatase of Proteus mirabilis (strain HI4320).